The chain runs to 390 residues: Phosphopentomutase (390 aa).

Positions 11, 283, 288, 324, 325, and 336 each coordinate Mn(2+).

Belongs to the phosphopentomutase family. It depends on Mn(2+) as a cofactor.

The protein resides in the cytoplasm. It catalyses the reaction 2-deoxy-alpha-D-ribose 1-phosphate = 2-deoxy-D-ribose 5-phosphate. It carries out the reaction alpha-D-ribose 1-phosphate = D-ribose 5-phosphate. It functions in the pathway carbohydrate degradation; 2-deoxy-D-ribose 1-phosphate degradation; D-glyceraldehyde 3-phosphate and acetaldehyde from 2-deoxy-alpha-D-ribose 1-phosphate: step 1/2. In terms of biological role, isomerase that catalyzes the conversion of deoxy-ribose 1-phosphate (dRib-1-P) and ribose 1-phosphate (Rib-1-P) to deoxy-ribose 5-phosphate (dRib-5-P) and ribose 5-phosphate (Rib-5-P), respectively. This is Phosphopentomutase from Alkaliphilus oremlandii (strain OhILAs) (Clostridium oremlandii (strain OhILAs)).